Reading from the N-terminus, the 676-residue chain is DNA ligase (676 aa).

Residues 32–36 (DAEYD), 81–82 (SL), and glutamate 113 each bind NAD(+). The active-site N6-AMP-lysine intermediate is the lysine 115. NAD(+) contacts are provided by arginine 136, glutamate 173, lysine 291, and lysine 315. Zn(2+) is bound by residues cysteine 409, cysteine 412, cysteine 427, and cysteine 433. A BRCT domain is found at 595-676 (SEKTYFFNKK…LNSLIRIKEQ (82 aa)).

Belongs to the NAD-dependent DNA ligase family. LigA subfamily. Mg(2+) serves as cofactor. The cofactor is Mn(2+).

The enzyme catalyses NAD(+) + (deoxyribonucleotide)n-3'-hydroxyl + 5'-phospho-(deoxyribonucleotide)m = (deoxyribonucleotide)n+m + AMP + beta-nicotinamide D-nucleotide.. Functionally, DNA ligase that catalyzes the formation of phosphodiester linkages between 5'-phosphoryl and 3'-hydroxyl groups in double-stranded DNA using NAD as a coenzyme and as the energy source for the reaction. It is essential for DNA replication and repair of damaged DNA. This Buchnera aphidicola subsp. Acyrthosiphon pisum (strain Tuc7) protein is DNA ligase.